A 485-amino-acid polypeptide reads, in one-letter code: Glutamyl-tRNA(Gln) amidotransferase subunit A (485 aa).

Active-site charge relay system residues include Lys-78 and Ser-153. The active-site Acyl-ester intermediate is Ser-177.

The protein belongs to the amidase family. GatA subfamily. In terms of assembly, heterotrimer of A, B and C subunits.

The catalysed reaction is L-glutamyl-tRNA(Gln) + L-glutamine + ATP + H2O = L-glutaminyl-tRNA(Gln) + L-glutamate + ADP + phosphate + H(+). Its function is as follows. Allows the formation of correctly charged Gln-tRNA(Gln) through the transamidation of misacylated Glu-tRNA(Gln) in organisms which lack glutaminyl-tRNA synthetase. The reaction takes place in the presence of glutamine and ATP through an activated gamma-phospho-Glu-tRNA(Gln). The protein is Glutamyl-tRNA(Gln) amidotransferase subunit A of Bacillus cereus (strain ATCC 14579 / DSM 31 / CCUG 7414 / JCM 2152 / NBRC 15305 / NCIMB 9373 / NCTC 2599 / NRRL B-3711).